The primary structure comprises 1192 residues: Protein WWC2 (1192 aa).

WW domains lie at 10-43 (LPLPRGWEEARDYDGKVFYIDHNTRRTSWIDPRD) and 57-90 (DELPWGWEAGFDPQIGVYYIDHINKTTQIEDPRK). Coiled-coil stretches lie at residues 121–194 (KEQR…YKEQ) and 224–256 (ELKSIRKAISSGEKEKQDLMQSLAKLQERFHLD). Residue S286 is modified to Phosphoserine. Residues 302–421 (LAEKVRLSLQ…KLEETTKLTT (120 aa)) are a coiled coil. Residues 441 to 462 (SSLGSLASSRGSLNTSSRGSLN) form a disordered region. Residues 698-821 (ETAQVQIGLR…FSSEVFTLWY (124 aa)) form the C2 domain. Positions 859–887 (ALLARTSAELLAVEQELAQEEEEESGQEE) form a coiled coil. Disordered stretches follow at residues 873–895 (QELAQEEEEESGQEEPRGPDGDW) and 911–991 (EAEV…SRQH). A compositionally biased stretch (acidic residues) spans 875 to 885 (LAQEEEEESGQ). Positions 923 to 933 (TEDLSSCTSVP) are enriched in polar residues. Positions 938–951 (DGNRKESNCAKDLR) are enriched in basic and acidic residues. T1004 is modified (phosphothreonine). Residue S1022 is modified to Phosphoserine. Residues 1031 to 1050 (SLFVRNSTERRSLRVKRTVC) form an interaction with PRKCZ region. A coiled-coil region spans residues 1068 to 1144 (DLELDLQASL…EQKQGLNAEK (77 aa)). Residues 1124–1137 (QAEKQAEQSKEEQK) are compositionally biased toward basic and acidic residues. A disordered region spans residues 1124–1143 (QAEKQAEQSKEEQKQGLNAE).

The protein belongs to the WWC family. Forms homodimers and heterodimers with WWC1 and WWC3. Interacts with DLC1 and PRKCZ. Interacts (via WW domains) with LATS1 and LATS2.

It localises to the cytoplasm. The protein localises to the cytosol. Regulator of the Hippo signaling pathway, also known as the Salvador-Warts-Hippo (SWH) pathway. Enhances phosphorylation of LATS1 and YAP1 and negatively regulates cell proliferation and organ growth due to a suppression of the transcriptional activity of YAP1, the major effector of the Hippo pathway. The polypeptide is Protein WWC2 (Homo sapiens (Human)).